Consider the following 278-residue polypeptide: MQKRAISSRFSEKAVSYEKYALVQKKMADHLSQMVTEITNENDVRSILEIGCGTGGLTRVIRSYFSAAHYEAVEIAQGMLEQAKNNLEQHGLICSFSQADAEEWVWEQQAKSKDLIVSGACFQWFARPAHTLRGLARILKPGAPLVFSTFGPDTFWELHDSFTNAHAILGEKGVRHGLEFLSARDWHEQLEQAGFTDIEISRKYERLTYPGVRDFLHAVKAVGASVSMEQGSGLGRRKLLAEMIRYYEQTYKRETGIPVTYEVIYVRAVSSRAVTFFK.

The protein belongs to the methyltransferase superfamily.

It carries out the reaction malonyl-[ACP] + S-adenosyl-L-methionine = malonyl-[ACP] methyl ester + S-adenosyl-L-homocysteine. Its pathway is cofactor biosynthesis; biotin biosynthesis. Converts the free carboxyl group of a malonyl-thioester to its methyl ester by transfer of a methyl group from S-adenosyl-L-methionine (SAM). It allows to synthesize pimeloyl-ACP via the fatty acid synthetic pathway. This Brevibacillus brevis (strain 47 / JCM 6285 / NBRC 100599) protein is Malonyl-[acyl-carrier protein] O-methyltransferase.